Here is a 245-residue protein sequence, read N- to C-terminus: 4-hydroxy-tetrahydrodipicolinate reductase (245 aa).

NAD(+)-binding positions include 7–12 (GAKGKV), 75–77 (GTT), and 102–105 (APNF). The active-site Proton donor/acceptor is His-132. His-133 contributes to the (S)-2,3,4,5-tetrahydrodipicolinate binding site. The active-site Proton donor is the Lys-136. 142–143 (GT) contributes to the (S)-2,3,4,5-tetrahydrodipicolinate binding site.

Belongs to the DapB family.

It localises to the cytoplasm. It catalyses the reaction (S)-2,3,4,5-tetrahydrodipicolinate + NAD(+) + H2O = (2S,4S)-4-hydroxy-2,3,4,5-tetrahydrodipicolinate + NADH + H(+). The catalysed reaction is (S)-2,3,4,5-tetrahydrodipicolinate + NADP(+) + H2O = (2S,4S)-4-hydroxy-2,3,4,5-tetrahydrodipicolinate + NADPH + H(+). It functions in the pathway amino-acid biosynthesis; L-lysine biosynthesis via DAP pathway; (S)-tetrahydrodipicolinate from L-aspartate: step 4/4. Catalyzes the conversion of 4-hydroxy-tetrahydrodipicolinate (HTPA) to tetrahydrodipicolinate. In Mycobacterium ulcerans (strain Agy99), this protein is 4-hydroxy-tetrahydrodipicolinate reductase.